A 704-amino-acid chain; its full sequence is Elongation factor G (704 aa).

In terms of domain architecture, tr-type G spans 8–291 (DKVRNIGIMA…AVIDYLASPV (284 aa)). GTP is bound by residues 17 to 24 (AHIDAGKT), 90 to 94 (DTPGH), and 144 to 147 (NKMD).

Belongs to the TRAFAC class translation factor GTPase superfamily. Classic translation factor GTPase family. EF-G/EF-2 subfamily.

The protein resides in the cytoplasm. Its function is as follows. Catalyzes the GTP-dependent ribosomal translocation step during translation elongation. During this step, the ribosome changes from the pre-translocational (PRE) to the post-translocational (POST) state as the newly formed A-site-bound peptidyl-tRNA and P-site-bound deacylated tRNA move to the P and E sites, respectively. Catalyzes the coordinated movement of the two tRNA molecules, the mRNA and conformational changes in the ribosome. The sequence is that of Elongation factor G from Chlorobaculum parvum (strain DSM 263 / NCIMB 8327) (Chlorobium vibrioforme subsp. thiosulfatophilum).